We begin with the raw amino-acid sequence, 2590 residues long: DNA polymerase theta (2590 aa).

A compositionally biased stretch (basic residues) spans 1-12 (MNLLRRSGKRRR). The interval 1 to 33 (MNLLRRSGKRRRSESGSDSFSGSGGDSSASPQF) is disordered. Low complexity predominate over residues 16 to 30 (GSDSFSGSGGDSSAS). ATP contacts are provided by residues Q96 and 115–122 (APTSAGKT). Residues 102–286 (LGQVLEGKNL…WLNAELYHTD (185 aa)) enclose the Helicase ATP-binding domain. The segment at 102-554 (LGQVLEGKNL…STSQDMHTYA (453 aa)) is helicase activity. Residues 216–219 (DELH) carry the DEAH box motif. The region spanning 321-554 (GDEDHVVSLC…STSQDMHTYA (234 aa)) is the Helicase C-terminal domain. Residues 847–894 (DEEEEAVEERRNMRTIWVTGRKGLTEREAAALIVEEARMILQQDLVEM) are interaction with RAD51. Position 990 is an N6-acetyllysine (K990). Residues 1034–1060 (KMSRSFRSWKRRKHLKRSRDSSPLKDS) are disordered. Over residues 1040-1050 (RSWKRRKHLKR) the composition is skewed to basic residues. A phosphoserine; by PLK1 mark is found at S1289, S1482, S1486, S1488, S1493, S1555, and S1563. The tract at residues 1594–1622 (SDPVLDEHHQGDQDGGDQDERAEKSKLTG) is disordered. Residues 1598–1619 (LDEHHQGDQDGGDQDERAEKSK) are compositionally biased toward basic and acidic residues. 2 positions are modified to phosphoserine; by PLK1: S1628 and S1635. T1755 is modified (phosphothreonine; by PLK1). The segment at 1777-1797 (PSDIKNHDLSPGSRNGFKDNS) is disordered. The tract at residues 2097–2584 (AECESQKHIM…KVKIGASWGE (488 aa)) is DNA polymerase activity. Loop regions lie at residues 2142–2177 (KLPP…GRQF) and 2257–2322 (EIKM…VPFP). Positions 2330 and 2331 each coordinate Mg(2+). The loop 3 stretch occupies residues 2491-2535 (QLETFHSTFKSHGHREGMLQSDQTGLSRKRKLQGMFCPIRGGFFI). D2540 contacts Mg(2+).

The protein belongs to the DNA polymerase type-A family. As to quaternary structure, homomultimer; forms homodimers and homotetramers. Interacts with RAD51. Interacts with ORC2 and ORC4. Interacts with RHNO1; interaction takes place during mitosis and promotes POLQ recruitment to DNA damage sites. Interacts (when phosphorylated) with TOPBP1 (via BRCT domains 7 and 8); promoting POLQ recruitment to DNA damage sites. Mg(2+) serves as cofactor. Post-translationally, phosphorylated by PLK1; promoting interaction with TOPBP1 and recruitment to DNA damage sites. In terms of tissue distribution, highly expressed in testis.

It is found in the nucleus. The protein localises to the chromosome. The enzyme catalyses DNA(n) + a 2'-deoxyribonucleoside 5'-triphosphate = DNA(n+1) + diphosphate. It catalyses the reaction ATP + H2O = ADP + phosphate + H(+). Specifically inhibited by the antibiotic novobiocin. The polymerase activity is specifically inhibited by the small molecule ART558. Novobiocin and ART558 confer specific killing of BRCA1/2-deficient cells and synergize with the poly [ADP-ribose] polymerase (PARP) inhibitor olaparib. Functionally, low-fidelity DNA polymerase with a helicase activity that promotes microhomology-mediated end-joining (MMEJ), an alternative non-homologous end-joining (NHEJ) machinery required to repair double-strand breaks in DNA during mitosis. MMEJ is an error-prone repair pathway that produces deletions of sequences from the strand being repaired and promotes genomic rearrangements, such as telomere fusions, some of them leading to cellular transformation. MMEJ is required during mitosis to repair persistent double-strand breaks that originate in S-phase. Although error-prone, MMEJ protects against chromosomal instability and tumorigenesis. The polymerase acts by binding directly the 2 ends of resected double-strand breaks, allowing microhomologous sequences in the overhangs to form base pairs. It then extends each strand from the base-paired region using the opposing overhang as a template. Requires partially resected DNA containing 2 to 6 base pairs of microhomology to perform MMEJ. The polymerase lacks proofreading activity and is highly promiscuous: unlike most polymerases, promotes extension of ssDNA and partial ssDNA (pssDNA) substrates. When the ends of a break do not contain terminal microhomology must identify embedded complementary sequences through a scanning step. Also acts as a DNA helicase, promoting dissociation of the replication protein A complex (RPA/RP-A), composed of RPA1, RPA2 and RPA3, from resected double-strand breaks to allow their annealing and subsequent joining by MMEJ. Removal of RPA/RP-A complex proteins prevents RAD51 accumulation at resected ends, thereby inhibiting homology-recombination repair (HR) pathway. Also shows RNA-directed DNA polymerase activity to mediate DNA repair in vitro; however this activity needs additional evidence in vivo. May also have lyase activity. Involved in somatic hypermutation of immunoglobulin genes, a process that requires the activity of DNA polymerases to ultimately introduce mutations at both A/T and C/G base pairs. POLQ-mediated end joining activity is involved in random integration of exogenous DNA hampers. This chain is DNA polymerase theta, found in Homo sapiens (Human).